The chain runs to 152 residues: Regulatory protein RecX (152 aa).

It belongs to the RecX family.

It localises to the cytoplasm. In terms of biological role, modulates RecA activity. The protein is Regulatory protein RecX of Chromobacterium violaceum (strain ATCC 12472 / DSM 30191 / JCM 1249 / CCUG 213 / NBRC 12614 / NCIMB 9131 / NCTC 9757 / MK).